Here is a 131-residue protein sequence, read N- to C-terminus: Ribonuclease P protein component (131 aa).

The protein belongs to the RnpA family. Consists of a catalytic RNA component (M1 or rnpB) and a protein subunit.

It carries out the reaction Endonucleolytic cleavage of RNA, removing 5'-extranucleotides from tRNA precursor.. In terms of biological role, RNaseP catalyzes the removal of the 5'-leader sequence from pre-tRNA to produce the mature 5'-terminus. It can also cleave other RNA substrates such as 4.5S RNA. The protein component plays an auxiliary but essential role in vivo by binding to the 5'-leader sequence and broadening the substrate specificity of the ribozyme. This is Ribonuclease P protein component from Acinetobacter baylyi (strain ATCC 33305 / BD413 / ADP1).